The following is a 310-amino-acid chain: 4-hydroxyproline 2-epimerase (310 aa).

The active-site Proton acceptor is Cys88. Substrate-binding positions include 89-90 (GH), His208, and Asp232. The active-site Proton donor is the Cys236. 237-238 (GT) is a substrate binding site.

It belongs to the proline racemase family.

The catalysed reaction is trans-4-hydroxy-L-proline = cis-4-hydroxy-D-proline. In terms of biological role, catalyzes the epimerization of trans-4-hydroxy-L-proline (t4LHyp) to cis-4-hydroxy-D-proline (c4DHyp). Is likely involved in a degradation pathway that converts t4LHyp to alpha-ketoglutarate. Displays no proline racemase activity. The chain is 4-hydroxyproline 2-epimerase from Burkholderia cenocepacia (strain ATCC BAA-245 / DSM 16553 / LMG 16656 / NCTC 13227 / J2315 / CF5610) (Burkholderia cepacia (strain J2315)).